The primary structure comprises 254 residues: Peptide methionine sulfoxide reductase A5 (254 aa).

Residues 1 to 26 (MARGSAAAAIAGVVWVLLLLVGVASG) form the signal peptide.

It belongs to the MsrA Met sulfoxide reductase family.

The catalysed reaction is L-methionyl-[protein] + [thioredoxin]-disulfide + H2O = L-methionyl-(S)-S-oxide-[protein] + [thioredoxin]-dithiol. The enzyme catalyses [thioredoxin]-disulfide + L-methionine + H2O = L-methionine (S)-S-oxide + [thioredoxin]-dithiol. Catalyzes the reduction of methionine sulfoxide (MetSO) to methionine in proteins. Plays a protective role against oxidative stress by restoring activity to proteins that have been inactivated by methionine oxidation. MSRA family specifically reduces the MetSO S-enantiomer. The sequence is that of Peptide methionine sulfoxide reductase A5 (MSRA5) from Oryza sativa subsp. japonica (Rice).